We begin with the raw amino-acid sequence, 489 residues long: Ribonuclease G (489 aa).

An S1 motif domain is found at 39 to 128 (GNIYKGRVSR…LTTDITLPSR (90 aa)). Mg(2+) is bound by residues D304 and D347.

Belongs to the RNase E/G family. RNase G subfamily. As to quaternary structure, homodimer, and possible higher multimers. Mg(2+) serves as cofactor.

It localises to the cytoplasm. In terms of biological role, acts in the processing of the 5'-end of precursors of 16S rRNA. Confers adaptive resistance to aminoglycoside antibiotics through modulation of 16S rRNA processing. An endoribonuclease, it prefers 5'-monophosphorylated substrates and cleaves single-stranded sites rich in A and U residues; also contributes to 23S rRNA processing, tRNA processing and mRNA turnover. Involved in decay of speF mRNA, has a preference for adenine nucleotides. The polypeptide is Ribonuclease G (Salmonella typhimurium (strain SL1344)).